The primary structure comprises 243 residues: RNA-binding protein with serine-rich domain 1 homolog (243 aa).

The interval 48-92 (SSTRQFNNTRSPSGRSASRSSNFSHRSSSRDSFSSNRSYSSSLSR) is disordered. Residues 57 to 92 (RSPSGRSASRSSNFSHRSSSRDSFSSNRSYSSSLSR) are compositionally biased toward low complexity. Residues 99-177 (RTILVENLTR…EELFVSIKRF (79 aa)) enclose the RRM domain. A disordered region spans residues 189–243 (YENSYRPSRSQNNSHYNDKSFHRSRYSRARSRSPGSNISEYSDQSPPYHSYRHRP). Residues 193–203 (YRPSRSQNNSH) show a composition bias toward polar residues. The segment covering 210 to 219 (HRSRYSRARS) has biased composition (basic residues). Over residues 222–235 (PGSNISEYSDQSPP) the composition is skewed to polar residues.

Belongs to the splicing factor SR family. In terms of assembly, component of the active spliceosome.

It localises to the cytoplasm. It is found in the nucleus. In terms of biological role, putative component of the spliceosome which enhances the formation of the ATP-dependent A complex of the spliceosome. may participate in mRNA 3'-end cleavage. Also mediates increase of mRNA abundance and translational efficiency. In Schizosaccharomyces pombe (strain 972 / ATCC 24843) (Fission yeast), this protein is RNA-binding protein with serine-rich domain 1 homolog.